We begin with the raw amino-acid sequence, 334 residues long: HTH-type transcriptional regulator RegA (334 aa).

An HTH lacI-type domain is found at 1 to 57 (MAASIKDVAREARVSIATVSRVLNNVDVVNEETKKKVMEAIKKLDYRPNIVARSLKT). A DNA-binding region (H-T-H motif) is located at residues 5-24 (IKDVAREARVSIATVSRVLN).

Functionally, involved in the regulation of amylase production. The protein is HTH-type transcriptional regulator RegA (regA) of Clostridium acetobutylicum (strain ATCC 824 / DSM 792 / JCM 1419 / IAM 19013 / LMG 5710 / NBRC 13948 / NRRL B-527 / VKM B-1787 / 2291 / W).